A 79-amino-acid polypeptide reads, in one-letter code: U-actitoxin-Oulsp1 (79 aa).

The N-terminal stretch at 1 to 21 (MNTKLVVVFLLSAILFVSVTA) is a signal peptide. The propeptide occupies 22–43 (SRPGKDLERDEAYETYDDENKR). A ShKT domain is found at 45-79 (CKDVFPAATCRHAKSVGNCSSEKYKRNCAITCGAC). 3 cysteine pairs are disulfide-bonded: C45–C79, C54–C72, and C63–C76. A crucial for binding to potassium channels region spans residues 67-68 (KY).

It belongs to the sea anemone type 1 potassium channel toxin family. Type 1b subfamily. Post-translationally, two similar peptides (OspTx2a-p1 and -p2) are obtained after synthesis and oxidative folding. They may differ by a D-Cys at position 76 (corresponding to OspTx2a-p2). Since C-terminal Cys residues are prone to racemization during solid-phase peptide synthesis, and if the presence of a D-amino acid is correct, it is probable that OspTx2a-p1 (L-Cys-76 form) corresponds to the native peptide.

Its subcellular location is the secreted. Toxin that weakly blocks the two voltage-gated potassium channels on Kv1.2/KCNA2 (IC(50)=1.8-2.5 uM) and Kv1.6/KCNA6 (IC(50)=5.6-6.2 uM). The polypeptide is U-actitoxin-Oulsp1 (Oulactis sp. (Sea anemone)).